A 149-amino-acid polypeptide reads, in one-letter code: 3-dehydroquinate dehydratase (149 aa).

Tyr26 serves as the catalytic Proton acceptor. Substrate contacts are provided by Asn77, His83, and Asp90. His103 functions as the Proton donor in the catalytic mechanism. Substrate contacts are provided by residues 104–105 and Arg114; that span reads LS.

It belongs to the type-II 3-dehydroquinase family. Homododecamer.

It carries out the reaction 3-dehydroquinate = 3-dehydroshikimate + H2O. It functions in the pathway metabolic intermediate biosynthesis; chorismate biosynthesis; chorismate from D-erythrose 4-phosphate and phosphoenolpyruvate: step 3/7. In terms of biological role, catalyzes a trans-dehydration via an enolate intermediate. This chain is 3-dehydroquinate dehydratase, found in Haemophilus influenzae (strain PittEE).